We begin with the raw amino-acid sequence, 433 residues long: MAKIVKVIGREIIDSRGNPTVEAEVHLEGGFVGLAAAPSGASTGSREALELRDGDKSRFLGKGVLKAVAAVNNEIAQAIVGKEGCAQSEIDQTMIDLDGTENKSKFGANAILAVSLATAKAAAASKGLPLYAYIAELNGTPGVYSMPLPMMNIINGGEHADNNVDIQEFMIQPIGAKTLREALRIGAEVFHNLAKVLKAKGLSTAVGDEGGFAPNLASNADALACIKEAVENAGYVLGKDITLAMDCASSEFYNKENGLYEMKGEGKSFTSQEFTHYLENLCKEYPIVSIEDGQDESDWDGFAYQTKILGDKVQLVGDDLFVTNTKILKEGIEKGIANSILIKFNQIGSLTETLAAIKMAKDAGYTAVISHRSGETEDATIADLAVGTAAGQIKTGSMSRSDRIAKYNQLIRIEEALGEMAPFLGLKAIKGQA.

Position 167 (glutamine 167) interacts with (2R)-2-phosphoglycerate. Catalysis depends on glutamate 209, which acts as the Proton donor. 3 residues coordinate Mg(2+): aspartate 246, glutamate 291, and aspartate 318. 4 residues coordinate (2R)-2-phosphoglycerate: lysine 343, arginine 372, serine 373, and lysine 394. Residue lysine 343 is the Proton acceptor of the active site.

It belongs to the enolase family. Component of the RNA degradosome, a multiprotein complex involved in RNA processing and mRNA degradation. Requires Mg(2+) as cofactor.

It localises to the cytoplasm. It is found in the secreted. The protein localises to the cell surface. The catalysed reaction is (2R)-2-phosphoglycerate = phosphoenolpyruvate + H2O. Its pathway is carbohydrate degradation; glycolysis; pyruvate from D-glyceraldehyde 3-phosphate: step 4/5. Catalyzes the reversible conversion of 2-phosphoglycerate (2-PG) into phosphoenolpyruvate (PEP). It is essential for the degradation of carbohydrates via glycolysis. In Haemophilus ducreyi (strain 35000HP / ATCC 700724), this protein is Enolase.